Reading from the N-terminus, the 453-residue chain is MFLQNLFLGFLAVVCANAQFAEFTAFDGKFDFKEHLTSRSPYHKPYFYGPSIDFPTTCKIKQVHTLQRHGSRNPTGGNAAFDAVGIANFQQRLLNGSVPIDYSVSGNPLSFVPTWTPVIEAANADALSSSGRVELFDMGRQFYERYHELFNASTYNIYTAAQQRVVDSALWYGYGMFGEDVHNFTNYILVSENATAGSNSLSSYNACPASDADDFTTPALEAWRNVYMPPIRQRLNPYFSNYNLTNDDILNLYGICSYEIALQDYSEFCKLFNSVDFLNFEYEGDLSFSYGMGNSVKWGSIFGGAYANSLANSLRSVENNTQQVFFAFTHDANIIPVETALGFFTDNTPENPLPTSYQVHSHSMKASEFVPFAGNLITELFQCEDSKYYVRHLVNEEVFPLSDCGFGPSNTSDGMCELYAYLNSPVRVNGTSNGIQNFDTLCNASAVAAVYPY.

Residues 1-18 (MFLQNLFLGFLAVVCANA) form the signal peptide. The Nucleophile role is filled by His-69. N-linked (GlcNAc...) asparagine glycosylation is found at Asn-95, Asn-151, Asn-183, Asn-193, Asn-243, and Asn-319. Catalysis depends on Asp-331, which acts as the Proton donor. Residues Asn-410, Asn-429, and Asn-443 are each glycosylated (N-linked (GlcNAc...) asparagine).

This sequence belongs to the histidine acid phosphatase family.

Its subcellular location is the secreted. It is found in the cell wall. It carries out the reaction a phosphate monoester + H2O = an alcohol + phosphate. This chain is Acid phosphatase (pho1), found in Schizosaccharomyces pombe (strain 972 / ATCC 24843) (Fission yeast).